The following is a 125-amino-acid chain: Anticoagulant salivary protein 14 (125 aa).

The N-terminal stretch at 1 to 21 is a signal peptide; it reads MGLTGTMLVLVSLAFFGSAAA. N-linked (GlcNAc...) asparagine glycosylation is found at N26, N81, and N87. Polar residues predominate over residues 75-86; sequence GECHLTNNSGGP. Positions 75–125 are disordered; the sequence is GECHLTNNSGGPNETDDYTPAPTEKPKQKKKKTKKTKKPKRKSKKDQEKNL. The interval 91 to 125 is responsible for anticoagulant activity; the sequence is DYTPAPTEKPKQKKKKTKKTKKPKRKSKKDQEKNL. Positions 101–118 are enriched in basic residues; the sequence is KQKKKKTKKTKKPKRKSK.

This sequence belongs to the salp14 family. As to expression, salivary gland (at protein level). Saliva (at protein level).

Its subcellular location is the secreted. Functionally, salivary anticoagulant protein that facilitates blood feeding of adult ticks on vertebrate species. Inhibits host coagulation factor Xa (F10). Blocks the assembly and/or early activity of the prothrombinase complex (Xa-Va/F10-F5). Inhibits the lectin pathway of complement system activation in the host. The sequence is that of Anticoagulant salivary protein 14 from Ixodes scapularis (Black-legged tick).